The following is a 447-amino-acid chain: 3-O-methyltransferase 2 (447 aa).

S-adenosyl-L-methionine-binding positions include 264–265 (GG), D287, 318–319 (DF), and R334. Residue H338 is the Proton acceptor of the active site.

It belongs to the class I-like SAM-binding methyltransferase superfamily. Cation-independent O-methyltransferase family. COMT subfamily.

Functionally, S-adenosyl-L-methionine-dependent methyltransferase that preferentially catalyzes the methylation of 3-OH phenolic compounds like isovanillic acid and 3-OH-4-Met cinnamic acid. May play a role in promoting lignin degradation by methylating and inactivating free-hydroxyl phenolic compounds, products of lignin cleavage which are known inhibitors of lignin peroxidases. This Phanerochaete chrysosporium (strain RP-78 / ATCC MYA-4764 / FGSC 9002) (White-rot fungus) protein is 3-O-methyltransferase 2.